A 413-amino-acid chain; its full sequence is Gamma-DL-glutamyl hydrolase (413 aa).

A signal peptide spans 1–32; it reads MNTLANWKKFLLVAVIICFLVPIMTKAEIAEA. 3 consecutive NlpC/P60 domains span residues 33–159, 163–287, and 291–413; these read DTSS…RRIA, ATAD…RRFD, and IPKE…IRVQ. Cys-194 (nucleophile) is an active-site residue. His-247 serves as the catalytic Proton acceptor. Residue Gln-259 is part of the active site.

This sequence belongs to the peptidase C40 family.

The protein resides in the secreted. Its subcellular location is the cell wall. Inhibited by pretreatment with 1 mM 4-(hydroxymercuri)benzoate, a sulfhydryl inhibitor. Functionally, cleaves, in an endo-type manner, the gamma-glutamyl bond between D-glutamate and L-glutamate of poly-gamma-glutamate (PGA). This chain is Gamma-DL-glutamyl hydrolase (pgdS), found in Bacillus subtilis (strain 168).